Consider the following 444-residue polypeptide: Zeaxanthin 4-ketolase (444 aa).

The tract at residues 408–444 is disordered; that stretch reads VAGGSSSGGGGEGGKPGAGEHGLLQRQRQLAPVGVMA. Residues 412-427 show a composition bias toward gly residues; that stretch reads SSSGGGGEGGKPGAGE.

The enzyme catalyses all-trans-adonixanthin + 2 AH2 + 2 O2 = all-trans-(3S,3'S)-astaxanthin + 2 A + 3 H2O. It catalyses the reaction all-trans-zeaxanthin + 2 AH2 + 2 O2 = all-trans-adonixanthin + 2 A + 3 H2O. The catalysed reaction is echinenone + 2 AH2 + 2 O2 = canthaxanthin + 2 A + 3 H2O. It carries out the reaction all-trans-beta-carotene + 2 AH2 + 2 O2 = echinenone + 2 A + 3 H2O. Its pathway is carotenoid biosynthesis; astaxanthin biosynthesis. Its function is as follows. Involved in the biosynthesis of ketocarotenoids which are powerful anti-oxidative molecules. Catalyzes the conversion of zeaxanthin to astaxanthin via adonixanthin. Catalyzes the conversion of beta-carotene to canthaxanthin via echinenone. In Chlamydomonas reinhardtii (Chlamydomonas smithii), this protein is Zeaxanthin 4-ketolase.